Consider the following 481-residue polypeptide: Glutamyl-tRNA(Gln) amidotransferase subunit A (481 aa).

Active-site charge relay system residues include K75 and S150. The Acyl-ester intermediate role is filled by S174.

This sequence belongs to the amidase family. GatA subfamily. Heterotrimer of A, B and C subunits.

It catalyses the reaction L-glutamyl-tRNA(Gln) + L-glutamine + ATP + H2O = L-glutaminyl-tRNA(Gln) + L-glutamate + ADP + phosphate + H(+). Functionally, allows the formation of correctly charged Gln-tRNA(Gln) through the transamidation of misacylated Glu-tRNA(Gln) in organisms which lack glutaminyl-tRNA synthetase. The reaction takes place in the presence of glutamine and ATP through an activated gamma-phospho-Glu-tRNA(Gln). This Macrococcus caseolyticus (strain JCSC5402) (Macrococcoides caseolyticum) protein is Glutamyl-tRNA(Gln) amidotransferase subunit A.